The chain runs to 137 residues: Small ribosomal subunit protein bS6 (137 aa).

The protein belongs to the bacterial ribosomal protein bS6 family.

Its function is as follows. Binds together with bS18 to 16S ribosomal RNA. The protein is Small ribosomal subunit protein bS6 of Sulfurimonas denitrificans (strain ATCC 33889 / DSM 1251) (Thiomicrospira denitrificans (strain ATCC 33889 / DSM 1251)).